The sequence spans 276 residues: 2,3,4,5-tetrahydropyridine-2,6-dicarboxylate N-succinyltransferase (276 aa).

Arginine 104 and aspartate 141 together coordinate substrate.

It belongs to the transferase hexapeptide repeat family. In terms of assembly, homotrimer.

The protein resides in the cytoplasm. It carries out the reaction (S)-2,3,4,5-tetrahydrodipicolinate + succinyl-CoA + H2O = (S)-2-succinylamino-6-oxoheptanedioate + CoA. It participates in amino-acid biosynthesis; L-lysine biosynthesis via DAP pathway; LL-2,6-diaminopimelate from (S)-tetrahydrodipicolinate (succinylase route): step 1/3. The sequence is that of 2,3,4,5-tetrahydropyridine-2,6-dicarboxylate N-succinyltransferase from Legionella pneumophila (strain Corby).